A 409-amino-acid polypeptide reads, in one-letter code: Argininosuccinate synthase (409 aa).

Residues 10 to 18 and Ala-37 each bind ATP; that span reads AYSGGLDTS. Residues Tyr-90 and Ser-95 each coordinate L-citrulline. An ATP-binding site is contributed by Gly-120. 3 residues coordinate L-aspartate: Thr-122, Asn-126, and Asp-127. Residue Asn-126 participates in L-citrulline binding. L-citrulline is bound by residues Arg-130, Ser-182, Ser-191, Glu-267, and Tyr-279.

This sequence belongs to the argininosuccinate synthase family. Type 1 subfamily. Homotetramer.

It is found in the cytoplasm. The catalysed reaction is L-citrulline + L-aspartate + ATP = 2-(N(omega)-L-arginino)succinate + AMP + diphosphate + H(+). It participates in amino-acid biosynthesis; L-arginine biosynthesis; L-arginine from L-ornithine and carbamoyl phosphate: step 2/3. The chain is Argininosuccinate synthase from Aromatoleum aromaticum (strain DSM 19018 / LMG 30748 / EbN1) (Azoarcus sp. (strain EbN1)).